We begin with the raw amino-acid sequence, 455 residues long: Killer cell immunoglobulin-like receptor 3DL2 (455 aa).

A signal peptide spans 1–21 (MSLTVVSMACVGFFLLQGAWP). Residues 22 to 340 (LMGGQDKPFL…SKSGICRHLH (319 aa)) lie on the Extracellular side of the membrane. 3 Ig-like C2-type domains span residues 42-102 (GGHV…RPHS), 137-202 (GETV…VPHS), and 237-300 (GENV…FRAL). Intrachain disulfides connect Cys49/Cys95 and Cys144/Cys195. N-linked (GlcNAc...) asparagine glycans are attached at residues Asn179, Asn239, Asn273, and Asn306. Cysteines 244 and 293 form a disulfide. A helical transmembrane segment spans residues 341 to 360 (VLIGTSVVIFLFILLLFFLL). Residues 361–455 (YRWCSNKKNA…APQSGLEGVF (95 aa)) are Cytoplasmic-facing.

It belongs to the immunoglobulin superfamily. Interacts with peptide-free HLA-F open conformer. As to expression, expressed in astrocytes.

The protein resides in the cell membrane. In terms of biological role, receptor on natural killer (NK) cells and T cells for MHC class I molecules. Upon binding of peptide-free HLA-F open conformer, negatively regulates NK and T cell effector functions. Acts as a receptor on astrocytes for HLA-F. Through interaction with HLA-F, may protect motor neurons from astrocyte-induced toxicity. The protein is Killer cell immunoglobulin-like receptor 3DL2 of Homo sapiens (Human).